The sequence spans 67 residues: Protein C' (67 aa).

This sequence belongs to the rhabdoviruses C protein family.

Seems to stimulates transcription by the viral polymerase. May play a role in viral pathogenesis or transmission by insects vectors. This chain is Protein C' (P), found in Vesicular stomatitis Indiana virus (strain 94GUB Central America) (VSIV).